The sequence spans 396 residues: MAKAKFERTKPHVNIGTIGHVDHGKTTTTAAITKVLADTYPELNEAFAFDSIDKAPEEKERGITINISHVEYQTEKRHYAHVDAPGHADYIKNMITGAAQMDGAILVVAATDGPMPQTREHVLLARQVGVPYILVALNKCDMVEDEEIIELVEMEVRELLAEQDYDEEAPIVHISALKALEGDEKWGKQILELMQACDDNIPDPVRETDKPFLMPIEDIFTITGRGTVVTGRVERGTLNVNDDVDIIGIKEKSTSTTVTGIEMFRKLLDSAEAGDNCGLLLRGIKREDVERGQVIVKPGAYTPHTEFEGSVYVLSKDEGGRHTPFFDNYRPQFYFRTTDVTGVVKLPEGTEMVMPGDNVDMSVTLIQPVAMDEGLRFAIREGSRTVGAGRVTKIIK.

Residues 10-205 (KPHVNIGTIG…ACDDNIPDPV (196 aa)) form the tr-type G domain. The tract at residues 19 to 26 (GHVDHGKT) is G1. 19–26 (GHVDHGKT) is a binding site for GTP. Threonine 26 provides a ligand contact to Mg(2+). The G2 stretch occupies residues 62–66 (GITIN). Residues 83 to 86 (DAPG) form a G3 region. Residues 83 to 87 (DAPGH) and 138 to 141 (NKCD) contribute to the GTP site. The tract at residues 138–141 (NKCD) is G4. A G5 region spans residues 175–177 (SAL).

Belongs to the TRAFAC class translation factor GTPase superfamily. Classic translation factor GTPase family. EF-Tu/EF-1A subfamily. As to quaternary structure, monomer.

Its subcellular location is the cytoplasm. The catalysed reaction is GTP + H2O = GDP + phosphate + H(+). GTP hydrolase that promotes the GTP-dependent binding of aminoacyl-tRNA to the A-site of ribosomes during protein biosynthesis. This chain is Elongation factor Tu, found in Corynebacterium glutamicum (strain ATCC 13032 / DSM 20300 / JCM 1318 / BCRC 11384 / CCUG 27702 / LMG 3730 / NBRC 12168 / NCIMB 10025 / NRRL B-2784 / 534).